Here is a 448-residue protein sequence, read N- to C-terminus: MSVHSEVLHALLKDPFIQKLIDAEPVFWANSGKKEGPLPRADEWATEIAEAEKRMQRFAPYIAEVFPETKGAKGIIESPLFEVQHMKGKLEAAYQQPFPGRWLLKCDHELPISGSIKARGGIYEVLKYAENLALQEGMLQETDDYRILQEERFTGFFSRYSIAVGSTGNLGLSIGIIGAALGFRVTVHMSADAKQWKKDLLRQKGVTVMEYETDYSEAVNEGRRQAEQDPFCYFIDDEHSRQLFLGYAVAASRLKTQLDCMNIKPSLETPLFVYLPCGVGGGPGGVAFGLKLLYGDDVHVFFAEPTHSPCMLLGLYSGLHEKISVQDIGLDNQTAADGLAVGRPSGFVGKLIEPLLSGCYTVEDNTLYTLLHMLAVSEDKYLEPSALAGMFGPVQLFSTEEGRRYAQKYKMEHAVHVVWGTGGSMVPKDEMAAYNRIGADLLKKRNEK.

At lysine 117 the chain carries N6-(pyridoxal phosphate)lysine.

It belongs to the serine/threonine dehydratase family. DsdA subfamily. Pyridoxal 5'-phosphate serves as cofactor.

The catalysed reaction is D-serine = pyruvate + NH4(+). This chain is Probable D-serine dehydratase (dsdA), found in Bacillus subtilis (strain 168).